We begin with the raw amino-acid sequence, 376 residues long: MATPVDPPNGIRNQGKHYFSMWQTLFEIDTKYVPIKPIGRGAYGVVCSSVNRESNERVAIKKIHNVFENRIDALRTLRELKLLRHLRHENVVALKDVMMANHKRSFKDVYLVYELMDTDLHQIIKSSQVLSNDHCQYFLFQLLRGLKYIHSANILHRDLKPGNLLVNANCDLKICDFGLARTSNTKGQFMTEYVVTRWYRAPELLLCCDNYGTSIDVWSVGCIFAELLGRKPVFPGTECLNQIKLIINILGSQREEDLEFIDNPKAKRYIESLPYSPGISFSRLYPGANVLAIDLLQKMLVLDPSKRISVTEALQHPYMAPLYDPSANPPAQVPIDLDVDEDEDLGAEMIRELMWKEMIHYHPEAATINNNEVSEF.

A Protein kinase domain is found at 32–319 (YVPIKPIGRG…VTEALQHPYM (288 aa)). ATP contacts are provided by residues 38–46 (IGRGAYGVV) and Lys61. Residue Asp158 is the Proton acceptor of the active site. Position 191 is a phosphothreonine (Thr191). The short motif at 191–193 (TEY) is the TXY element. A Phosphotyrosine modification is found at Tyr193. A Phosphothreonine modification is found at Thr196.

It belongs to the protein kinase superfamily. CMGC Ser/Thr protein kinase family. MAP kinase subfamily. Interacts with MKK3. Post-translationally, dually phosphorylated on Thr-191 and Tyr-193, which activates the enzyme. Phosphorylated on Ser residue. As to expression, highest levels in the stem. Present in the leaf, root and flower, but not in seeds.

The catalysed reaction is L-seryl-[protein] + ATP = O-phospho-L-seryl-[protein] + ADP + H(+). The enzyme catalyses L-threonyl-[protein] + ATP = O-phospho-L-threonyl-[protein] + ADP + H(+). Its activity is regulated as follows. Activated by threonine and tyrosine phosphorylation. The sequence is that of Mitogen-activated protein kinase 2 (MPK2) from Arabidopsis thaliana (Mouse-ear cress).